The following is a 442-amino-acid chain: Exodeoxyribonuclease 7 large subunit (442 aa).

Belongs to the XseA family. As to quaternary structure, heterooligomer composed of large and small subunits.

The protein resides in the cytoplasm. The catalysed reaction is Exonucleolytic cleavage in either 5'- to 3'- or 3'- to 5'-direction to yield nucleoside 5'-phosphates.. Functionally, bidirectionally degrades single-stranded DNA into large acid-insoluble oligonucleotides, which are then degraded further into small acid-soluble oligonucleotides. This is Exodeoxyribonuclease 7 large subunit from Shewanella woodyi (strain ATCC 51908 / MS32).